The primary structure comprises 183 residues: uncharacterized protein (183 aa).

The segment at 1–23 is disordered; sequence MGSSFVIDRSSSSPAPPRGPAPK.

This is an uncharacterized protein from Saccharomyces cerevisiae (strain ATCC 204508 / S288c) (Baker's yeast).